The primary structure comprises 401 residues: Ascaroside receptor GPR3 (401 aa).

Topologically, residues 1–16 (MQPFGDAWSQRHLAGV) are extracellular. The helical transmembrane segment at 17-37 (VLAGSVLSIVGSLYMILGFFF) threads the bilayer. At 38–47 (LRECRSFRHK) the chain is on the cytoplasmic side. Residues 48 to 68 (LILGLAVSDLLLALNFFIPSL) form a helical membrane-spanning segment. Over 69-93 (SMVTGREISSPWNEGFCSANGFLMQ) the chain is Extracellular. A disulfide bridge links Cys-85 with Cys-159. Residues 94–114 (LFFAQIDVWQISIALITLLML) traverse the membrane as a helical segment. Residues 115-128 (SGPSMVLKWIRENV) lie on the Cytoplasmic side of the membrane. The helical transmembrane segment at 129–149 (WAVWLFPWLVSLIAAFFAFGF) threads the bilayer. Topologically, residues 150–175 (WDYANVGGFCWLGSRNIRLYFNYIPR) are extracellular. Residues 176 to 196 (WIIILVCLVIYIAVYRLILHA) form a helical membrane-spanning segment. The Cytoplasmic segment spans residues 197-294 (RRRANIQKTY…QKQVRKIAIQ (98 aa)). A disordered region spans residues 206-259 (YRGRASDRAPPQPVTTTAPATNPESEKVNPDEISSGNGSSSLDTSRSGSSTGFT). The segment covering 239-257 (SSGNGSSSLDTSRSGSSTG) has biased composition (low complexity). Residues 295 to 315 (MISYPLAYAVLWAIPTIVMII) form a helical membrane-spanning segment. At 316–321 (QVARGG) the chain is on the extracellular side. A helical membrane pass occupies residues 322-342 (EGVSIHVEGLAKMLLVFNGFV). At 343 to 401 (DAHVYGFNERTAMGWRQRIRPAAQEDDEEAAGTSGGVHEVVSRPEPTLKNPNVWQQNMV) the chain is on the cytoplasmic side. The tract at residues 362–401 (RPAAQEDDEEAAGTSGGVHEVVSRPEPTLKNPNVWQQNMV) is disordered. Residues 391 to 401 (KNPNVWQQNMV) show a composition bias toward polar residues.

This sequence belongs to the G-protein coupled receptor 1 family. Interacts with ascaroside receptor GPR2; may form a functional heterodimer. Interacts with guanine nucleotide-binding protein alpha GPA2; to activate adenylate cyclase and positively regulate nematode trap formation.

It localises to the cell membrane. In terms of biological role, g protein-coupled receptor that senses nematode ascaroside pheromones and signals via adenylate cyclase to positively regulate trap formation for nematode capture. This Arthrobotrys oligospora (strain ATCC 24927 / CBS 115.81 / DSM 1491) (Nematode-trapping fungus) protein is Ascaroside receptor GPR3.